The chain runs to 64 residues: Small ribosomal subunit protein bS21 (64 aa).

It belongs to the bacterial ribosomal protein bS21 family.

This Oenococcus oeni (strain ATCC BAA-331 / PSU-1) protein is Small ribosomal subunit protein bS21.